A 65-amino-acid polypeptide reads, in one-letter code: uncharacterized protein (65 aa).

The disordered stretch occupies residues 1–30; sequence MPAASLESLLPPPPGKLPSPPLRPHGKFQR. Residues 10–23 are compositionally biased toward pro residues; the sequence is LPPPPGKLPSPPLR.

This is an uncharacterized protein from Homo sapiens (Human).